The chain runs to 85 residues: Arminin 6494 (85 aa).

The N-terminal stretch at 1-18 (MKTVFAILFLAFIALTYA) is a signal peptide. The propeptide occupies 19 to 57 (RSYEDVKEEIKNEVEKEILEDLEEESDELNDKRKEINDA). At alanine 82 the chain carries Alanine amide.

It belongs to the arminin family. Expressed in entodermal epithelium along the body column.

The protein resides in the secreted. The protein localises to the target cell membrane. Functionally, antimicrobial peptide with a broad-spectrum antimicrobial activity. Keeps its antibacterial activity under a wide range of salt concentrations that mimic physiological conditions of human blood, which is surprising, since Hydra is an obligate freshwater animal with nearly no salt tolerance. Does not affect red blood cells. This is Arminin 6494 from Hydra vulgaris (Hydra).